The following is a 156-amino-acid chain: MPRKGPAPKRPLVNDPVYGSQLVTQLVNKVLLKGKKSLAERIVYGALEQARDKTGTDPVITLKRALDNVKPALEVRSRRVGGATYQVPVEVRPDRSTTLALRWLVGYSRQRREKTMIERLANEILDASNGLGASVKRREDTHKMAEANRAFAHYRW.

This sequence belongs to the universal ribosomal protein uS7 family. As to quaternary structure, part of the 30S ribosomal subunit. Contacts proteins S9 and S11.

Its function is as follows. One of the primary rRNA binding proteins, it binds directly to 16S rRNA where it nucleates assembly of the head domain of the 30S subunit. Is located at the subunit interface close to the decoding center, probably blocks exit of the E-site tRNA. The protein is Small ribosomal subunit protein uS7 of Mycobacterium bovis (strain ATCC BAA-935 / AF2122/97).